The chain runs to 92 residues: MPRSLKKGPFIDLHLLKKVEKAVESGDKKPIKTWSRRSTIFPNMIGLTIAVHNGRQHVPVFVSDEMVGHKLGEFAPTRTYRGHAADKKAKKR.

Belongs to the universal ribosomal protein uS19 family.

In terms of biological role, protein S19 forms a complex with S13 that binds strongly to the 16S ribosomal RNA. The chain is Small ribosomal subunit protein uS19 from Photorhabdus laumondii subsp. laumondii (strain DSM 15139 / CIP 105565 / TT01) (Photorhabdus luminescens subsp. laumondii).